The chain runs to 365 residues: Chorismate synthase (365 aa).

NADP(+) contacts are provided by R48 and R54. FMN contacts are provided by residues 125 to 127 (RSS), 237 to 238 (NA), G277, 292 to 296 (KPTSS), and R318.

Belongs to the chorismate synthase family. Homotetramer. FMNH2 serves as cofactor.

It carries out the reaction 5-O-(1-carboxyvinyl)-3-phosphoshikimate = chorismate + phosphate. It participates in metabolic intermediate biosynthesis; chorismate biosynthesis; chorismate from D-erythrose 4-phosphate and phosphoenolpyruvate: step 7/7. Its function is as follows. Catalyzes the anti-1,4-elimination of the C-3 phosphate and the C-6 proR hydrogen from 5-enolpyruvylshikimate-3-phosphate (EPSP) to yield chorismate, which is the branch point compound that serves as the starting substrate for the three terminal pathways of aromatic amino acid biosynthesis. This reaction introduces a second double bond into the aromatic ring system. The protein is Chorismate synthase of Verminephrobacter eiseniae (strain EF01-2).